An 80-amino-acid chain; its full sequence is Large ribosomal subunit protein eL14 (80 aa).

The protein belongs to the eukaryotic ribosomal protein eL14 family.

The polypeptide is Large ribosomal subunit protein eL14 (Methanocaldococcus jannaschii (strain ATCC 43067 / DSM 2661 / JAL-1 / JCM 10045 / NBRC 100440) (Methanococcus jannaschii)).